Reading from the N-terminus, the 278-residue chain is HTH-type transcriptional activator RhaS (278 aa).

The HTH araC/xylS-type domain maps to 174 to 272 (NLLLAWLEDH…NWSPRDIRQG (99 aa)). 2 consecutive DNA-binding regions (H-T-H motif) follow at residues 191 to 212 (DAVA…KQQT) and 239 to 262 (VTDI…RREF).

In terms of assembly, binds DNA as a dimer.

The protein localises to the cytoplasm. In terms of biological role, activates expression of the rhaBAD and rhaT operons. The polypeptide is HTH-type transcriptional activator RhaS (Escherichia coli (strain SMS-3-5 / SECEC)).